Consider the following 421-residue polypeptide: MDKIVINGGNRLTGEVNVEGAKNAVLPVLTASLLASEGHSKLVNVPELSDVETINNVLSTLNANVEYDKDKNAVKVDATKTLNEEAPYEYVSKMRASILVMGPLLARLGHAIVALPGGCAIGTRPIEQHIKGFEALGADIHLENGNIYANAKDGLKGAHIHLDFPSVGATQNIIMAASLASGKSIIENVAKEPEIVDLANYINEMGGKITGAGTDTITIHGVEKLYGVEHAIIPDRIEAGTLLIAGAITRGDIFVRGAIKEHMASLIYKLEEMGVDLEYYEEGIRVTANGDLNPVDVKTLPHPGFPTDMQSQMMALLLTANGHKVITETVFENRFMHVAEFRRMNANISVEGRSAKIEGKSHLQGAQVKATDLRAAAALILAGLVAEGTTQVTELKHLDRGYVNLHGKLKSLGANIERVNR.

22–23 is a binding site for phosphoenolpyruvate; sequence KN. A UDP-N-acetyl-alpha-D-glucosamine-binding site is contributed by arginine 95. The active-site Proton donor is the cysteine 119. Residue cysteine 119 is modified to 2-(S-cysteinyl)pyruvic acid O-phosphothioketal. Residues 124 to 128, aspartate 308, and valine 330 contribute to the UDP-N-acetyl-alpha-D-glucosamine site; that span reads RPIEQ.

Belongs to the EPSP synthase family. MurA subfamily.

It localises to the cytoplasm. It catalyses the reaction phosphoenolpyruvate + UDP-N-acetyl-alpha-D-glucosamine = UDP-N-acetyl-3-O-(1-carboxyvinyl)-alpha-D-glucosamine + phosphate. It functions in the pathway cell wall biogenesis; peptidoglycan biosynthesis. Its function is as follows. Cell wall formation. Adds enolpyruvyl to UDP-N-acetylglucosamine. The protein is UDP-N-acetylglucosamine 1-carboxyvinyltransferase 1 of Staphylococcus epidermidis (strain ATCC 35984 / DSM 28319 / BCRC 17069 / CCUG 31568 / BM 3577 / RP62A).